Consider the following 182-residue polypeptide: Probable RNA 2'-phosphotransferase (182 aa).

Belongs to the KptA/TPT1 family.

In terms of biological role, removes the 2'-phosphate from RNA via an intermediate in which the phosphate is ADP-ribosylated by NAD followed by a presumed transesterification to release the RNA and generate ADP-ribose 1''-2''-cyclic phosphate (APPR&gt;P). May function as an ADP-ribosylase. The sequence is that of Probable RNA 2'-phosphotransferase from Trichormus variabilis (strain ATCC 29413 / PCC 7937) (Anabaena variabilis).